The primary structure comprises 820 residues: Catenin beta (820 aa).

The segment covering 1-16 (MEQARYSNQQSVNPQQ) has biased composition (polar residues). Positions 1 to 74 (MEQARYSNQQ…SRHEDGGEEA (74 aa)) are disordered. The span at 52 to 63 (SSATSHPPSVSS) shows a compositional bias: low complexity. ARM repeat units follow at residues 157–196 (NYQD…QLSK), 199–239 (ASRH…NLSH), 241–280 (RAGL…NLLL), 283–322 (EGSK…ILAY), 367–405 (HNNK…RNLS), 406–445 (DCHR…NLTC), 448–489 (SRNK…HVTS), 495–535 (EMGQ…NLAL), 603–642 (SHNR…ELSL), and 644–683 (KQGA…RMSD). Residues 708–811 (PWGDPLDMPS…LDSIPPADNT (104 aa)) form a disordered region. The span at 785-796 (GMDPGLPDMGPP) shows a compositional bias: low complexity.

This sequence belongs to the beta-catenin family.

It localises to the cytoplasm. Its subcellular location is the cytoskeleton. Its function is as follows. Binds to the cytoplasmic domain of the cell-cell adhesion molecule E-cadherin, and perhaps to other (membrane) proteins. The association of catenins to cadherins produces a complex which is linked to the actin filament network, and which seems to be of primary importance for cadherins cell-adhesion properties. The chain is Catenin beta from Tripneustes gratilla (Hawaian sea urchin).